The following is a 259-amino-acid chain: Global transcriptional regulator CodY (259 aa).

A GAF domain region spans residues 1 to 155; it reads MELLAKTRKL…SSTVVGMEIL (155 aa). A DNA-binding region (H-T-H motif) is located at residues 203–222; the sequence is ASKIADRVGITRSVIVNALR. Serine 215 carries the phosphoserine modification.

This sequence belongs to the CodY family.

It localises to the cytoplasm. Its function is as follows. DNA-binding global transcriptional regulator which is involved in the adaptive response to starvation and acts by directly or indirectly controlling the expression of numerous genes in response to nutrient availability. During rapid exponential growth, CodY is highly active and represses genes whose products allow adaptation to nutrient depletion. The polypeptide is Global transcriptional regulator CodY (Bacillus cereus (strain ATCC 10987 / NRS 248)).